The primary structure comprises 145 residues: Natriuretic peptides A (145 aa).

The first 23 residues, 1 to 23 (MGTSFVGYLTFVLLLLALTKVRG), serve as a signal peptide directing secretion. The propeptide occupies 24 to 117 (GPAYNSPLSS…KLRELLNAPR (94 aa)). Cysteine 125 and cysteine 141 form a disulfide bridge.

Belongs to the natriuretic peptide family. Post-translationally, cleaved upon secretion to produce the functional hormone.

The protein resides in the secreted. In terms of biological role, hormone playing a key role in cardiovascular homeostasis through regulation of natriuresis, diuresis, and vasodilation. Has a cGMP-stimulating activity. This is Natriuretic peptides A from Aquarana catesbeiana (American bullfrog).